The following is a 211-amino-acid chain: ATP phosphoribosyltransferase (211 aa).

It belongs to the ATP phosphoribosyltransferase family. Short subfamily. Heteromultimer composed of HisG and HisZ subunits.

It is found in the cytoplasm. The enzyme catalyses 1-(5-phospho-beta-D-ribosyl)-ATP + diphosphate = 5-phospho-alpha-D-ribose 1-diphosphate + ATP. It participates in amino-acid biosynthesis; L-histidine biosynthesis; L-histidine from 5-phospho-alpha-D-ribose 1-diphosphate: step 1/9. Its function is as follows. Catalyzes the condensation of ATP and 5-phosphoribose 1-diphosphate to form N'-(5'-phosphoribosyl)-ATP (PR-ATP). Has a crucial role in the pathway because the rate of histidine biosynthesis seems to be controlled primarily by regulation of HisG enzymatic activity. The protein is ATP phosphoribosyltransferase of Rippkaea orientalis (strain PCC 8801 / RF-1) (Cyanothece sp. (strain PCC 8801)).